The sequence spans 437 residues: 3-phosphoshikimate 1-carboxyvinyltransferase (437 aa).

3-phosphoshikimate-binding residues include Lys28, Ser29, and Arg33. Lys28 lines the phosphoenolpyruvate pocket. Gly97 and Arg125 together coordinate phosphoenolpyruvate. 3-phosphoshikimate is bound by residues Ser168, Ser169, Gln170, Glu316, and His343. Phosphoenolpyruvate is bound at residue Gln170. Glu316 (proton acceptor) is an active-site residue. 3 residues coordinate phosphoenolpyruvate: Arg347, Arg388, and Lys413.

This sequence belongs to the EPSP synthase family. In terms of assembly, monomer.

It is found in the cytoplasm. The enzyme catalyses 3-phosphoshikimate + phosphoenolpyruvate = 5-O-(1-carboxyvinyl)-3-phosphoshikimate + phosphate. The protein operates within metabolic intermediate biosynthesis; chorismate biosynthesis; chorismate from D-erythrose 4-phosphate and phosphoenolpyruvate: step 6/7. In terms of biological role, catalyzes the transfer of the enolpyruvyl moiety of phosphoenolpyruvate (PEP) to the 5-hydroxyl of shikimate-3-phosphate (S3P) to produce enolpyruvyl shikimate-3-phosphate and inorganic phosphate. In Rhodococcus erythropolis (strain PR4 / NBRC 100887), this protein is 3-phosphoshikimate 1-carboxyvinyltransferase.